We begin with the raw amino-acid sequence, 323 residues long: Acetyl-coenzyme A carboxylase carboxyl transferase subunit alpha (323 aa).

The CoA carboxyltransferase C-terminal domain maps to 39–293; the sequence is RLSKKSQQLT…RRALADSLRQ (255 aa).

This sequence belongs to the AccA family. As to quaternary structure, acetyl-CoA carboxylase is a heterohexamer composed of biotin carboxyl carrier protein (AccB), biotin carboxylase (AccC) and two subunits each of ACCase subunit alpha (AccA) and ACCase subunit beta (AccD).

The protein localises to the cytoplasm. The catalysed reaction is N(6)-carboxybiotinyl-L-lysyl-[protein] + acetyl-CoA = N(6)-biotinyl-L-lysyl-[protein] + malonyl-CoA. It participates in lipid metabolism; malonyl-CoA biosynthesis; malonyl-CoA from acetyl-CoA: step 1/1. Its function is as follows. Component of the acetyl coenzyme A carboxylase (ACC) complex. First, biotin carboxylase catalyzes the carboxylation of biotin on its carrier protein (BCCP) and then the CO(2) group is transferred by the carboxyltransferase to acetyl-CoA to form malonyl-CoA. The polypeptide is Acetyl-coenzyme A carboxylase carboxyl transferase subunit alpha (Burkholderia lata (strain ATCC 17760 / DSM 23089 / LMG 22485 / NCIMB 9086 / R18194 / 383)).